A 284-amino-acid polypeptide reads, in one-letter code: Bifunctional protein FolD (284 aa).

166 to 168 (GAS) contributes to the NADP(+) binding site.

The protein belongs to the tetrahydrofolate dehydrogenase/cyclohydrolase family. In terms of assembly, homodimer.

The enzyme catalyses (6R)-5,10-methylene-5,6,7,8-tetrahydrofolate + NADP(+) = (6R)-5,10-methenyltetrahydrofolate + NADPH. It catalyses the reaction (6R)-5,10-methenyltetrahydrofolate + H2O = (6R)-10-formyltetrahydrofolate + H(+). It participates in one-carbon metabolism; tetrahydrofolate interconversion. In terms of biological role, catalyzes the oxidation of 5,10-methylenetetrahydrofolate to 5,10-methenyltetrahydrofolate and then the hydrolysis of 5,10-methenyltetrahydrofolate to 10-formyltetrahydrofolate. This Legionella pneumophila (strain Corby) protein is Bifunctional protein FolD.